Consider the following 1233-residue polypeptide: Hemocyanin A-type, units Ode to Odg (1233 aa).

An ODD region spans residues 1–4 (EGNE). The tract at residues 5–422 (YLVRKNVERL…KQDADIDIPL (418 aa)) is ODE. His45 serves as a coordination point for Cu cation. Residues Cys51 and Cys62 are joined by a disulfide bond. Positions 63 to 65 (CLH) form a cross-link, 2'-(S-cysteinyl)-histidine (Cys-His). Cu cation contacts are provided by His65, His74, His186, His190, and His217. Disulfide bonds link Cys176–Cys243 and Cys334–Cys340. Asn392 carries an N-linked (GlcNAc...) asparagine glycan. Positions 423 to 839 (NHIRRNVESL…KEIEKEAVRG (417 aa)) are ODF. His463 contributes to the Cu cation binding site. An intrachain disulfide couples Cys468 to Cys478. A cross-link (2'-(S-cysteinyl)-histidine (Cys-His)) is located at residues 479-481 (CLH). His481 and His490 together coordinate Cu cation. A glycan (N-linked (GlcNAc...) asparagine) is linked at Asn538. Disulfide bonds link Cys589-Cys656 and Cys743-Cys748. Residues His599, His603, and His630 each contribute to the Cu cation site. The tract at residues 840–1233 (TIIRKNVNSL…VFLAPAKTTH (394 aa)) is ODG. A Cu cation-binding site is contributed by His880. An intrachain disulfide couples Cys886 to Cys896. An N-linked (GlcNAc...) asparagine glycan is attached at Asn890. The 2'-(S-cysteinyl)-histidine (Cys-His) cross-link spans 897-899 (CQH). 5 residues coordinate Cu cation: His899, His908, His1008, His1012, and His1039. Disulfide bonds link Cys998–Cys1065 and Cys1152–Cys1158.

Belongs to the tyrosinase family. Hemocyanin subfamily. Decamers of large identical subunits (350 kDa), each containing 7 globular oxygen-binding domains: ODA, ODB, ODC, ODD, ODE, ODF, and ODG. It depends on Cu(2+) as a cofactor.

Its function is as follows. Hemocyanins are copper-containing oxygen carriers occurring freely dissolved in the hemolymph of many mollusks and arthropods. This Enteroctopus dofleini (North Pacific giant octopus) protein is Hemocyanin A-type, units Ode to Odg.